The sequence spans 274 residues: 2-dehydro-3-deoxyphosphooctonate aldolase (274 aa).

The protein belongs to the KdsA family.

Its subcellular location is the cytoplasm. The enzyme catalyses D-arabinose 5-phosphate + phosphoenolpyruvate + H2O = 3-deoxy-alpha-D-manno-2-octulosonate-8-phosphate + phosphate. It participates in carbohydrate biosynthesis; 3-deoxy-D-manno-octulosonate biosynthesis; 3-deoxy-D-manno-octulosonate from D-ribulose 5-phosphate: step 2/3. Its pathway is bacterial outer membrane biogenesis; lipopolysaccharide biosynthesis. In Legionella pneumophila (strain Lens), this protein is 2-dehydro-3-deoxyphosphooctonate aldolase.